The chain runs to 426 residues: D-cysteine desulfhydrase 1, mitochondrial (426 aa).

A mitochondrion-targeting transit peptide spans 1-63; sequence MARGAHQAPG…IGSFLSKRPY (63 aa). The residue at position 119 (K119) is an N6-(pyridoxal phosphate)lysine. S146 functions as the Nucleophile in the catalytic mechanism.

It belongs to the ACC deaminase/D-cysteine desulfhydrase family. Homodimer. Pyridoxal 5'-phosphate is required as a cofactor. Present in seeds (at protein level).

It localises to the mitochondrion. The enzyme catalyses D-cysteine + H2O = hydrogen sulfide + pyruvate + NH4(+) + H(+). With respect to regulation, inhibited by L-cysteine (L-cys). Its function is as follows. Catalyzes the production of hydrogen sulfide (H2S) from D-cysteine (D-cys). This is D-cysteine desulfhydrase 1, mitochondrial from Oryza sativa subsp. japonica (Rice).